The primary structure comprises 681 residues: Cadmium, zinc and cobalt-transporting ATPase (681 aa).

The HMA domain maps to 1 to 66 (MQKYHFTGLD…LEPDMELSEQ (66 aa)). Topologically, residues 1-72 (MQKYHFTGLD…LSEQVQSEAK (72 aa)) are cytoplasmic. Cd(2+)-binding residues include Cys11 and Cys14. Positions 11 and 14 each coordinate Co(2+). Zn(2+)-binding residues include Cys11 and Cys14. A helical transmembrane segment spans residues 73-92 (PSAIPLLLSVVLYLIAVATI). At 93-102 (HFSAQNWALH) the chain is on the extracellular side. A helical transmembrane segment spans residues 103–124 (LSYALLAGVYLVAGKDVFLGAL). The Cytoplasmic portion of the chain corresponds to 125–131 (RAIRNKQ). Residues 132-151 (FFDENTLMLSATIAAFGVGA) traverse the membrane as a helical segment. The Extracellular segment spans residues 152–154 (HEE). A helical transmembrane segment spans residues 155-174 (AVSIMVFYSAGEFLQQLAIA). The Cytoplasmic segment spans residues 175–308 (RSKQSLHALL…ITTFARYYTP (134 aa)). Residues 309–327 (AVFAIALLIALVPPLLGHG) traverse the membrane as a helical segment. Residues 328–332 (DFDTW) lie on the Extracellular side of the membrane. A helical transmembrane segment spans residues 333–350 (IYRGLFALMVSCPCALVI). Residues 351–630 (SVPLGYFGGV…VFKIAKKTKR (280 aa)) are Cytoplasmic-facing. Asp388 (4-aspartylphosphate intermediate) is an active-site residue. Mg(2+) is bound by residues Asp578 and Asp582. Residues 631 to 652 (IIIENIIFALAIKAMFIVLGLS) form a helical membrane-spanning segment. The Extracellular segment spans residues 653-660 (GDASLWEA). The helical transmembrane segment at 661–676 (VLGDVGVTLIALANSM) threads the bilayer. The Cytoplasmic portion of the chain corresponds to 677–681 (RTMRI).

The protein belongs to the cation transport ATPase (P-type) (TC 3.A.3) family. Type IB subfamily.

It localises to the cell membrane. The catalysed reaction is Zn(2+)(in) + ATP + H2O = Zn(2+)(out) + ADP + phosphate + H(+). The enzyme catalyses Cd(2+)(in) + ATP + H2O = Cd(2+)(out) + ADP + phosphate + H(+). Its function is as follows. Couples the hydrolysis of ATP with the transport of cadmium, zinc and cobalt out of the cell. The sequence is that of Cadmium, zinc and cobalt-transporting ATPase (cadA) from Helicobacter felis.